We begin with the raw amino-acid sequence, 989 residues long: Cellulose synthase A catalytic subunit 4 [UDP-forming] (989 aa).

Residues 1–184 are Cytoplasmic-facing; it reads MMESGVPPCA…SRIIPISKNK (184 aa). Zn(2+)-binding residues include C9, C12, C20, C23, C28, C31, C43, and C46. The RING-type; degenerate zinc finger occupies 9 to 47; sequence CAACGDDAHAACRACSYALCKACLDEDAAEGRTTCARCG. Basic residues predominate over residues 138–149; sequence KKEKKASAKKAA. Residues 138-158 form a disordered region; that stretch reads KKEKKASAKKAAAKAQAPPVE. A helical membrane pass occupies residues 185-205; the sequence is LTPYRAVIIMRLVVLGLFFHY. Residues 206-213 are Extracellular-facing; it reads RITNPVYS. The helical transmembrane segment at 214–234 threads the bilayer; it reads AFGLWMTSVICEIWFGFSWIL. Topologically, residues 235–772 are cytoplasmic; the sequence is DQFPKWCPIN…INTIVYPFTS (538 aa). Residues S272, K278, E279, and D308 each coordinate UDP-alpha-D-glucose. D308 is an active-site residue. Residues 362–389 are a coiled coil; it reads VKERRAMKRDYEEYKVRINALVAKAQKT. K449 serves as a coordination point for UDP-alpha-D-glucose. Mn(2+) is bound by residues K450 and D474. D688 is a catalytic residue. A helical transmembrane segment spans residues 773 to 793; sequence LPLIAYCCLPAICLLTGKFII. Topologically, residues 794–798 are extracellular; that stretch reads PTLSN. A helical transmembrane segment spans residues 799–819; that stretch reads AATIWFLGLFISIIVTSVLEL. The Cytoplasmic segment spans residues 820–835; it reads RWSGIGIEDWWRNEQF. Residues 836-856 form a helical membrane-spanning segment; that stretch reads WVIGGVSAHLFAVFQGILKMI. The Extracellular segment spans residues 857 to 884; that stretch reads AGLDTNFTVTAKATDDTEFGELYVFKWT. N862 carries an N-linked (GlcNAc...) asparagine glycan. A helical transmembrane segment spans residues 885–905; sequence TVLIPPTSILVLNLVGVVAGF. Residues 906-916 lie on the Cytoplasmic side of the membrane; the sequence is SDALNSGYESW. Residues 917–937 traverse the membrane as a helical segment; that stretch reads GPLFGKVFFAMWVIMHLYPFL. Residues 938 to 946 lie on the Extracellular side of the membrane; it reads KGLMGRQNR. A helical transmembrane segment spans residues 947-967; sequence TPTIVVLWSVLLASVFSLLWV. At 968-989 the chain is on the cytoplasmic side; sequence KIDPFIGSSETTTTNSCANFDC.

It belongs to the glycosyltransferase 2 family. Plant cellulose synthase subfamily. The cofactor is Mn(2+). It depends on Zn(2+) as a cofactor.

Its subcellular location is the cell membrane. The enzyme catalyses [(1-&gt;4)-beta-D-glucosyl](n) + UDP-alpha-D-glucose = [(1-&gt;4)-beta-D-glucosyl](n+1) + UDP + H(+). It functions in the pathway glycan metabolism; plant cellulose biosynthesis. Its function is as follows. Catalytic subunit of cellulose synthase terminal complexes ('rosettes'), required for beta-1,4-glucan microfibril crystallization, a major mechanism of the cell wall formation. Involved in the secondary cell wall formation. This Oryza sativa subsp. indica (Rice) protein is Cellulose synthase A catalytic subunit 4 [UDP-forming] (CESA4).